A 229-amino-acid polypeptide reads, in one-letter code: Potassium/proton antiporter CemA (229 aa).

4 helical membrane passes run 7-27 (FTPLLYLVSIVFLPWWLSLSF), 114-134 (IICFVILSGFSILGNEELVIL), 154-174 (ILLLTDLCIGFHSPHGWELMV), and 189-209 (IISGLVSTFPVILDTIFKYWI).

This sequence belongs to the CemA family.

The protein resides in the plastid. It localises to the chloroplast inner membrane. The catalysed reaction is K(+)(in) + H(+)(out) = K(+)(out) + H(+)(in). Contributes to K(+)/H(+) antiport activity by supporting proton efflux to control proton extrusion and homeostasis in chloroplasts in a light-dependent manner to modulate photosynthesis. Prevents excessive induction of non-photochemical quenching (NPQ) under continuous-light conditions. Indirectly promotes efficient inorganic carbon uptake into chloroplasts. The polypeptide is Potassium/proton antiporter CemA (Coffea arabica (Arabian coffee)).